The sequence spans 670 residues: Sodium/potassium/calcium exchanger 2 (670 aa).

The Cytoplasmic segment spans residues 1–38 (MDLHQSATVRLLQEWCSHESPSGCRRHYNTRKKLKLIR). Residues 39 to 59 (VIGLVMGLVAVSTVPFSISAF) traverse the membrane as a helical segment. Topologically, residues 60 to 133 (TETYSQNNRG…DVFSLEERRK (74 aa)) are extracellular. 2 disordered regions span residues 67 to 86 (NRGEASDVTGPRAAPGHRQR) and 91 to 122 (LNDKIRDYTPQPPASQEDRSENGTDHAQGDYP). Residues 106–122 (QEDRSENGTDHAQGDYP) show a composition bias toward basic and acidic residues. N-linked (GlcNAc...) asparagine glycosylation occurs at Asn-112. A helical membrane pass occupies residues 134 to 154 (GAIILHVIGMIYMFIALAIVC). Over 155–179 (DEFFVPSLTVITEKLGISDDVAGAT) the chain is Cytoplasmic. Residues 175 to 215 (VAGATFMAAGGSAPELFTSLIGVFIAHSNVGIGTIVGSAVF) form an Alpha-1 repeat. Residues 180–200 (FMAAGGSAPELFTSLIGVFIA) form a helical membrane-spanning segment. The Extracellular segment spans residues 201–205 (HSNVG). Residues 206–226 (IGTIVGSAVFNILFVIGMCAL) traverse the membrane as a helical segment. The Cytoplasmic portion of the chain corresponds to 227–244 (FSREILNLTWWPLFRDVS). The helical transmembrane segment at 245–265 (FYIVDLIMLIIFFLDNVIMWW) threads the bilayer. Glu-266 is a topological domain (extracellular). The chain crosses the membrane as a helical span at residues 267 to 287 (SLLLLTAYFAYVVFMKFNVQV). Residues 288–506 (ERWVKQMINR…PDVRKPASKK (219 aa)) are Cytoplasmic-facing. The segment at 312 to 335 (ASTAGDKEEPTLPNKPRLQRGGSS) is disordered. A phosphoserine mark is found at Ser-337 and Ser-341. Disordered regions lie at residues 394–414 (KCQVDENERQNGAANHVDYAA) and 450–471 (AADAPQATETAEEDDDQPLSLS). Residues 507 to 527 (FFPITFFGSITWIAVFSYLMV) form a helical membrane-spanning segment. Over 528-542 (WWAHQVGETIGISEE) the chain is Extracellular. A helical transmembrane segment spans residues 543–563 (IMGLTILAAGTSIPDLITSVI). Residues 550–581 (AAGTSIPDLITSVIVARKGLGDMAVSSSVGSN) form an Alpha-2 repeat. Topologically, residues 564–578 (VARKGLGDMAVSSSV) are cytoplasmic. The chain crosses the membrane as a helical span at residues 579–599 (GSNIFDITVGLPLPWLLYTII). Residues 600-611 (HRFKPVTVSSNG) lie on the Extracellular side of the membrane. The chain crosses the membrane as a helical span at residues 612–632 (LFCAIVLLFIMLIFVILSIAL). At 633-639 (CKWRMNK) the chain is on the cytoplasmic side. The helical transmembrane segment at 640–660 (ILGFIMFGLYFAFLVVSVLLE) threads the bilayer. The Extracellular segment spans residues 661-670 (DKVLECPVSI).

The protein belongs to the Ca(2+):cation antiporter (CaCA) (TC 2.A.19) family. SLC24A subfamily. As to expression, expressed abundantly in all regions of the brain and weakly in the eye, large intestine and adrenal tissue.

The protein resides in the cell membrane. It catalyses the reaction Ca(2+)(out) + K(+)(out) + 4 Na(+)(in) = Ca(2+)(in) + K(+)(in) + 4 Na(+)(out). Functionally, calcium, potassium:sodium antiporter that transports 1 Ca(2+) and 1 K(+) in exchange for 4 Na(+). Required for learming and memory by regulating neuronal Ca(2+), which is essential for the development of synaptic plasticity. This chain is Sodium/potassium/calcium exchanger 2 (Slc24a2), found in Rattus norvegicus (Rat).